A 366-amino-acid chain; its full sequence is Probable UDP-arabinopyranose mutase 2 (366 aa).

Positions 104–106 (DDD) match the DXD motif motif. An N-linked (Glc...) arginine glycan is attached at Arg-152.

This sequence belongs to the RGP family. Homopentamer or homohexamer. It depends on Mn(2+) as a cofactor. The cofactor is Mg(2+). In terms of processing, reversibly glycosylated by UDP-glucose, UDP-xylose and UDP-galactose, but not UDP-mannose. In terms of tissue distribution, expressed in all tissues tested, including root, tuber, leaf, petiole, shoot, stolon and stem.

Its subcellular location is the secreted. It localises to the cell wall. It is found in the cell junction. The protein resides in the plasmodesma. The protein localises to the golgi apparatus. The enzyme catalyses UDP-beta-L-arabinofuranose = UDP-beta-L-arabinopyranose. Functionally, probable UDP-L-arabinose mutase involved in the biosynthesis of cell wall non-cellulosic polysaccharides. Was initially shown to possess an autoglycosylating activity which is dependent on the presence of UDP-glucose and manganese. In Solanum tuberosum (Potato), this protein is Probable UDP-arabinopyranose mutase 2.